The chain runs to 452 residues: MIQYKVLIPEISLLILAIISFFYGFISRNYRTTYILSFLSILTAIILSVFNFGQKEFTSELIKIDLYRQTLRILVLFIGVFIIGLSYSDLKLKSSKSVEYVFLLLLSLFGMNLMIVANDLLILYLALETFSLSLYILAGFYRKESLSIEAGMKYFILGTLSSIILLGSIVFFYAQTGSTSYETFKLLKTENLNILLGVVFLISAFAFKLSLAPFHAWAPDVYQGAPTAVTAFLSTAPKVAVFGALINIFLSINLKLNIQDLIVIISALSMLVGNVLALRQNNLKRMLAYSSIAHAGYMFMAFLLPEKELLISLIPYLIVYVFMNLSAFAFIMNIKNGESIQNYLGVGRKNPLLSFCIIVIMFSLTGVPPTAGFIVKFNLFKNLLSYGYGSLVFFALLMSIFSAFYYLRPVFYLYKDSLVIDIYNHPLNNSMALSGALLLIFLGLFPNLLLIF.

Helical transmembrane passes span 6-26 (VLIP…YGFI), 33-53 (TYIL…FNFG), 70-90 (TLRI…YSDL), 97-117 (SVEY…MIVA), 120-140 (LLIL…LAGF), 154-174 (YFIL…FFYA), 194-214 (ILLG…LAPF), 232-252 (FLST…FLSI), 258-278 (IQDL…VLAL), 286-306 (MLAY…LLPE), 311-331 (ISLI…FAFI), 355-375 (FCII…GFIV), 387-407 (GYGS…FYYL), and 432-452 (ALSG…LLIF).

It belongs to the complex I subunit 2 family. In terms of assembly, NDH-1 is composed of 14 different subunits. Subunits NuoA, H, J, K, L, M, N constitute the membrane sector of the complex.

It localises to the cell inner membrane. The enzyme catalyses a quinone + NADH + 5 H(+)(in) = a quinol + NAD(+) + 4 H(+)(out). Its function is as follows. NDH-1 shuttles electrons from NADH, via FMN and iron-sulfur (Fe-S) centers, to quinones in the respiratory chain. The immediate electron acceptor for the enzyme in this species is believed to be ubiquinone. Couples the redox reaction to proton translocation (for every two electrons transferred, four hydrogen ions are translocated across the cytoplasmic membrane), and thus conserves the redox energy in a proton gradient. This Thermodesulfovibrio yellowstonii (strain ATCC 51303 / DSM 11347 / YP87) protein is NADH-quinone oxidoreductase subunit N 2.